Here is a 388-residue protein sequence, read N- to C-terminus: Protein RecA (388 aa).

Glycine 79–threonine 86 is an ATP binding site. Residues isoleucine 347–glutamate 372 are disordered. Residues threonine 357–alanine 369 show a composition bias toward basic and acidic residues.

The protein belongs to the RecA family.

Its subcellular location is the cytoplasm. Can catalyze the hydrolysis of ATP in the presence of single-stranded DNA, the ATP-dependent uptake of single-stranded DNA by duplex DNA, and the ATP-dependent hybridization of homologous single-stranded DNAs. It interacts with LexA causing its activation and leading to its autocatalytic cleavage. The polypeptide is Protein RecA (Streptococcus pneumoniae (strain CGSP14)).